Reading from the N-terminus, the 404-residue chain is Probable tRNA sulfurtransferase (404 aa).

One can recognise a THUMP domain in the interval 61 to 166 (EAVSERLKDV…SGYSYIMCDE (106 aa)). ATP-binding positions include 184–185 (LL), 209–210 (HF), arginine 266, glycine 288, and glutamine 297.

The protein belongs to the ThiI family.

The protein resides in the cytoplasm. It catalyses the reaction [ThiI sulfur-carrier protein]-S-sulfanyl-L-cysteine + a uridine in tRNA + 2 reduced [2Fe-2S]-[ferredoxin] + ATP + H(+) = [ThiI sulfur-carrier protein]-L-cysteine + a 4-thiouridine in tRNA + 2 oxidized [2Fe-2S]-[ferredoxin] + AMP + diphosphate. The enzyme catalyses [ThiS sulfur-carrier protein]-C-terminal Gly-Gly-AMP + S-sulfanyl-L-cysteinyl-[cysteine desulfurase] + AH2 = [ThiS sulfur-carrier protein]-C-terminal-Gly-aminoethanethioate + L-cysteinyl-[cysteine desulfurase] + A + AMP + 2 H(+). The protein operates within cofactor biosynthesis; thiamine diphosphate biosynthesis. Its function is as follows. Catalyzes the ATP-dependent transfer of a sulfur to tRNA to produce 4-thiouridine in position 8 of tRNAs, which functions as a near-UV photosensor. Also catalyzes the transfer of sulfur to the sulfur carrier protein ThiS, forming ThiS-thiocarboxylate. This is a step in the synthesis of thiazole, in the thiamine biosynthesis pathway. The sulfur is donated as persulfide by IscS. This chain is Probable tRNA sulfurtransferase, found in Bacillus cereus (strain AH187).